Reading from the N-terminus, the 358-residue chain is MPRIQVLDIRGSKESVGSTPHLRAAILEGLLKPPGSRTLPSETLYDEVGLKMYNDGMKAWAEWYYPVEAERQILERYGRDIAKLFTTSAKGKAVLIELGAGSLDKTSQVLLSAAEITRTTGPMNNIAYYALDLERGELERTIGRLQEVIGDQIAGKISTAGMWGTYDDGIRVIEKNELELEPDIPVHILFLGGTIGNFSKQDGDVAFLKSLPLDHKRGDTLLVGMDRHKSADAIERSYGFAAAKDWIMNGLKVSGRVLTGDEGLFEIGNWERYAKYNEELGRYEAGYKSQKEHALKISEGVDITFLKDEVVLVMFSNKYTDAEMDSVVDSAGLVKNGSWMDEKAQYCLLSLRANNGPV.

Belongs to the methyltransferase superfamily.

It catalyses the reaction L-tryptophan + S-adenosyl-L-methionine = N(alpha)-methyl-L-tryptophan + S-adenosyl-L-homocysteine + H(+). The enzyme catalyses N(alpha)-methyl-L-tryptophan + S-adenosyl-L-methionine = N(alpha),N(alpha)-dimethyl-L-tryptophan + S-adenosyl-L-homocysteine + H(+). It carries out the reaction N(alpha),N(alpha)-dimethyl-L-tryptophan + S-adenosyl-L-methionine = N(alpha),N(alpha),N(alpha)-trimethyl-L-tryptophan + S-adenosyl-L-homocysteine + H(+). Functionally, methyltransferase that catalyzes iterative L-tryptophan N-methylations to produce L-abrine (N-alpha-methyl-L-tryptophan) and N,N-alpha-dimethyl-L-tryptophan. Also catalyzes a third methylation to yield L-hypaphorine (N,N,N-alpha-trimethyl-L-tryptopan), an agonist of the phytohormone indole-3-acetic acid. Can also N-methylate the non-native amino acid substrate 4-hydroxytryptophan, but the ability to incorporate trpM into a functional psilocybin biosynthesis pathway is indeed thwarted by the inability of the L-tryptophan decarboxylase psiD to use N,N-dimethyl-4-hydroxytryptophan as substrate. The protein is L-tryptophan methyltransferase trpM of Psilocybe serbica.